The following is a 59-amino-acid chain: Large ribosomal subunit protein bL35 (59 aa).

A compositionally biased stretch (basic residues) spans 17-43 (GQIKRKHAYTSHLAPHKSTKQKRHLRK). Positions 17 to 47 (GQIKRKHAYTSHLAPHKSTKQKRHLRKQATV) are disordered.

It belongs to the bacterial ribosomal protein bL35 family.

This Mycoplasma genitalium (strain ATCC 33530 / DSM 19775 / NCTC 10195 / G37) (Mycoplasmoides genitalium) protein is Large ribosomal subunit protein bL35.